Consider the following 187-residue polypeptide: Pterin-4-alpha-carbinolamine dehydratase 2, mitochondrial (187 aa).

The N-terminal 33 residues, 1-33, are a transit peptide targeting the mitochondrion; sequence MSRLLLPKLFSISRTQVPAASLFNNLYRRHKRF.

Belongs to the pterin-4-alpha-carbinolamine dehydratase family.

The protein localises to the mitochondrion. The enzyme catalyses (4aS,6R)-4a-hydroxy-L-erythro-5,6,7,8-tetrahydrobiopterin = (6R)-L-erythro-6,7-dihydrobiopterin + H2O. Involved in tetrahydrobiopterin biosynthesis. Possesses pterin-4-alpha-carbinolamine dehydratase activity when expressed in a bacterial heterolgous system. The protein is Pterin-4-alpha-carbinolamine dehydratase 2, mitochondrial of Arabidopsis thaliana (Mouse-ear cress).